The sequence spans 249 residues: Enolase-phosphatase E1 (249 aa).

2 residues coordinate Mg(2+): Asp14 and Glu16. Substrate is bound by residues 141-142 (SS) and Lys175. Asp200 is a binding site for Mg(2+).

The protein belongs to the HAD-like hydrolase superfamily. MasA/MtnC family. In terms of assembly, monomer. Mg(2+) is required as a cofactor.

The protein localises to the cytoplasm. It is found in the nucleus. It catalyses the reaction 5-methylsulfanyl-2,3-dioxopentyl phosphate + H2O = 1,2-dihydroxy-5-(methylsulfanyl)pent-1-en-3-one + phosphate. The protein operates within amino-acid biosynthesis; L-methionine biosynthesis via salvage pathway; L-methionine from S-methyl-5-thio-alpha-D-ribose 1-phosphate: step 3/6. It participates in amino-acid biosynthesis; L-methionine biosynthesis via salvage pathway; L-methionine from S-methyl-5-thio-alpha-D-ribose 1-phosphate: step 4/6. Bifunctional enzyme that catalyzes the enolization of 2,3-diketo-5-methylthiopentyl-1-phosphate (DK-MTP-1-P) into the intermediate 2-hydroxy-3-keto-5-methylthiopentenyl-1-phosphate (HK-MTPenyl-1-P), which is then dephosphorylated to form the acireductone 1,2-dihydroxy-3-keto-5-methylthiopentene (DHK-MTPene). This is Enolase-phosphatase E1 from Drosophila mojavensis (Fruit fly).